The sequence spans 323 residues: Annexin A5 (323 aa).

Annexin repeat units follow at residues 17–88, 89–160, 172–244, and 248–319; these read FNDK…ALMV, PAHL…SLVQ, GQVE…AVVK, and SIQG…LLCG.

Belongs to the annexin family.

Calcium/phospholipid-binding protein which promotes membrane fusion and is involved in exocytosis. The protein is Annexin A5 of Cynops pyrrhogaster (Japanese fire-bellied newt).